Consider the following 313-residue polypeptide: tRNA uridine(34) hydroxylase (313 aa).

One can recognise a Rhodanese domain in the interval 124-218; it reads SDPEVLLIDT…YLEEVPQEET (95 aa). The active-site Cysteine persulfide intermediate is the C178.

The protein belongs to the TrhO family.

The catalysed reaction is uridine(34) in tRNA + AH2 + O2 = 5-hydroxyuridine(34) in tRNA + A + H2O. Functionally, catalyzes oxygen-dependent 5-hydroxyuridine (ho5U) modification at position 34 in tRNAs. The polypeptide is tRNA uridine(34) hydroxylase (Pseudomonas fluorescens (strain SBW25)).